A 52-amino-acid polypeptide reads, in one-letter code: Metallothionein-2 (52 aa).

2 consecutive repeats follow at residues 43–47 and 48–52; these read QTCKC.

Belongs to the metallothionein superfamily. Type 10 family.

In terms of biological role, the metallothioneins are involved in the cellular sequestration of toxic metal ions. This chain is Metallothionein-2 (MT-II), found in Candida glabrata (strain ATCC 2001 / BCRC 20586 / JCM 3761 / NBRC 0622 / NRRL Y-65 / CBS 138) (Yeast).